Here is a 425-residue protein sequence, read N- to C-terminus: Sucrose-phosphatase 2 (425 aa).

Belongs to the sucrose phosphatase family. Homodimer. It depends on Mg(2+) as a cofactor.

The catalysed reaction is sucrose 6(F)-phosphate + H2O = sucrose + phosphate. The protein operates within glycan biosynthesis; sucrose biosynthesis; sucrose from D-fructose 6-phosphate and UDP-alpha-D-glucose: step 2/2. Its activity is regulated as follows. Inhibited by EDTA. Functionally, catalyzes the final step of sucrose synthesis. This chain is Sucrose-phosphatase 2 (SPP2), found in Nicotiana tabacum (Common tobacco).